A 346-amino-acid polypeptide reads, in one-letter code: N-acetyl-gamma-glutamyl-phosphate reductase (346 aa).

The active site involves Cys-150.

This sequence belongs to the NAGSA dehydrogenase family. Type 1 subfamily.

It is found in the cytoplasm. The catalysed reaction is N-acetyl-L-glutamate 5-semialdehyde + phosphate + NADP(+) = N-acetyl-L-glutamyl 5-phosphate + NADPH + H(+). Its pathway is amino-acid biosynthesis; L-arginine biosynthesis; N(2)-acetyl-L-ornithine from L-glutamate: step 3/4. Functionally, catalyzes the NADPH-dependent reduction of N-acetyl-5-glutamyl phosphate to yield N-acetyl-L-glutamate 5-semialdehyde. This is N-acetyl-gamma-glutamyl-phosphate reductase from Moorella thermoacetica (strain ATCC 39073 / JCM 9320).